The chain runs to 137 residues: Large ribosomal subunit protein uL11 (137 aa).

It belongs to the universal ribosomal protein uL11 family. Part of the ribosomal stalk of the 50S ribosomal subunit. Interacts with L10 and the large rRNA to form the base of the stalk. L10 forms an elongated spine to which L12 dimers bind in a sequential fashion forming a multimeric L10(L12)X complex. Post-translationally, one or more lysine residues are methylated.

In terms of biological role, forms part of the ribosomal stalk which helps the ribosome interact with GTP-bound translation factors. The chain is Large ribosomal subunit protein uL11 from Mycoplasma pneumoniae (strain ATCC 29342 / M129 / Subtype 1) (Mycoplasmoides pneumoniae).